The following is a 285-amino-acid chain: tRNA pseudouridine synthase B (285 aa).

Aspartate 40 functions as the Nucleophile in the catalytic mechanism.

This sequence belongs to the pseudouridine synthase TruB family. Type 1 subfamily.

The enzyme catalyses uridine(55) in tRNA = pseudouridine(55) in tRNA. Functionally, responsible for synthesis of pseudouridine from uracil-55 in the psi GC loop of transfer RNAs. In Caldanaerobacter subterraneus subsp. tengcongensis (strain DSM 15242 / JCM 11007 / NBRC 100824 / MB4) (Thermoanaerobacter tengcongensis), this protein is tRNA pseudouridine synthase B.